The primary structure comprises 516 residues: Exodeoxyribonuclease 7 large subunit (516 aa).

It belongs to the XseA family. As to quaternary structure, heterooligomer composed of large and small subunits.

The protein localises to the cytoplasm. It catalyses the reaction Exonucleolytic cleavage in either 5'- to 3'- or 3'- to 5'-direction to yield nucleoside 5'-phosphates.. Functionally, bidirectionally degrades single-stranded DNA into large acid-insoluble oligonucleotides, which are then degraded further into small acid-soluble oligonucleotides. This Chlamydia trachomatis serovar L2 (strain ATCC VR-902B / DSM 19102 / 434/Bu) protein is Exodeoxyribonuclease 7 large subunit.